The following is a 78-amino-acid chain: Acyl carrier protein (78 aa).

The Carrier domain occupies 2-77 (DDLFKKIQQL…DAYEFIKSQQ (76 aa)). Serine 37 carries the O-(pantetheine 4'-phosphoryl)serine modification.

This sequence belongs to the acyl carrier protein (ACP) family. In terms of processing, 4'-phosphopantetheine is transferred from CoA to a specific serine of apo-ACP by AcpS. This modification is essential for activity because fatty acids are bound in thioester linkage to the sulfhydryl of the prosthetic group.

Its subcellular location is the cytoplasm. It functions in the pathway lipid metabolism; fatty acid biosynthesis. Its function is as follows. Carrier of the growing fatty acid chain in fatty acid biosynthesis. The protein is Acyl carrier protein of Treponema denticola (strain ATCC 35405 / DSM 14222 / CIP 103919 / JCM 8153 / KCTC 15104).